We begin with the raw amino-acid sequence, 142 residues long: Phosphoribosyl-AMP cyclohydrolase (142 aa).

Position 85 (aspartate 85) interacts with Mg(2+). Cysteine 86 is a Zn(2+) binding site. Mg(2+) contacts are provided by aspartate 87 and aspartate 89. The Zn(2+) site is built by cysteine 102 and cysteine 109. Residues 120 to 142 (GEPPTPVGAGERQPASGTADAAP) are disordered.

This sequence belongs to the PRA-CH family. Homodimer. The cofactor is Mg(2+). Zn(2+) serves as cofactor.

Its subcellular location is the cytoplasm. It carries out the reaction 1-(5-phospho-beta-D-ribosyl)-5'-AMP + H2O = 1-(5-phospho-beta-D-ribosyl)-5-[(5-phospho-beta-D-ribosylamino)methylideneamino]imidazole-4-carboxamide. It participates in amino-acid biosynthesis; L-histidine biosynthesis; L-histidine from 5-phospho-alpha-D-ribose 1-diphosphate: step 3/9. Its function is as follows. Catalyzes the hydrolysis of the adenine ring of phosphoribosyl-AMP. The polypeptide is Phosphoribosyl-AMP cyclohydrolase (Acidothermus cellulolyticus (strain ATCC 43068 / DSM 8971 / 11B)).